The sequence spans 500 residues: Probable malate:quinone oxidoreductase (500 aa).

This sequence belongs to the MQO family. It depends on FAD as a cofactor.

It carries out the reaction (S)-malate + a quinone = a quinol + oxaloacetate. It participates in carbohydrate metabolism; tricarboxylic acid cycle; oxaloacetate from (S)-malate (quinone route): step 1/1. This is Probable malate:quinone oxidoreductase from Bacillus anthracis (strain A0248).